We begin with the raw amino-acid sequence, 395 residues long: Succinyl-diaminopimelate desuccinylase (395 aa).

A Zn(2+)-binding site is contributed by histidine 74. Aspartate 76 is an active-site residue. Aspartate 107 is a binding site for Zn(2+). Glutamate 141 functions as the Proton acceptor in the catalytic mechanism. Residues glutamate 142, glutamate 170, and histidine 368 each contribute to the Zn(2+) site.

This sequence belongs to the peptidase M20A family. DapE subfamily. In terms of assembly, homodimer. It depends on Zn(2+) as a cofactor. The cofactor is Co(2+).

The enzyme catalyses N-succinyl-(2S,6S)-2,6-diaminopimelate + H2O = (2S,6S)-2,6-diaminopimelate + succinate. It participates in amino-acid biosynthesis; L-lysine biosynthesis via DAP pathway; LL-2,6-diaminopimelate from (S)-tetrahydrodipicolinate (succinylase route): step 3/3. Catalyzes the hydrolysis of N-succinyl-L,L-diaminopimelic acid (SDAP), forming succinate and LL-2,6-diaminopimelate (DAP), an intermediate involved in the bacterial biosynthesis of lysine and meso-diaminopimelic acid, an essential component of bacterial cell walls. The chain is Succinyl-diaminopimelate desuccinylase from Brucella abortus (strain S19).